A 186-amino-acid polypeptide reads, in one-letter code: ATP synthase subunit b (186 aa).

A helical membrane pass occupies residues 25 to 45; that stretch reads IVWSVVCVAIIAVVFYKYVIP.

This sequence belongs to the ATPase B chain family. As to quaternary structure, F-type ATPases have 2 components, F(1) - the catalytic core - and F(0) - the membrane proton channel. F(1) has five subunits: alpha(3), beta(3), gamma(1), delta(1), epsilon(1). F(0) has three main subunits: a(1), b(2) and c(10-14). The alpha and beta chains form an alternating ring which encloses part of the gamma chain. F(1) is attached to F(0) by a central stalk formed by the gamma and epsilon chains, while a peripheral stalk is formed by the delta and b chains.

The protein resides in the cell membrane. Its function is as follows. F(1)F(0) ATP synthase produces ATP from ADP in the presence of a proton or sodium gradient. F-type ATPases consist of two structural domains, F(1) containing the extramembraneous catalytic core and F(0) containing the membrane proton channel, linked together by a central stalk and a peripheral stalk. During catalysis, ATP synthesis in the catalytic domain of F(1) is coupled via a rotary mechanism of the central stalk subunits to proton translocation. In terms of biological role, component of the F(0) channel, it forms part of the peripheral stalk, linking F(1) to F(0). This Nocardia farcinica (strain IFM 10152) protein is ATP synthase subunit b.